Reading from the N-terminus, the 447-residue chain is 26S proteasome non-ATPase regulatory subunit 12 (447 aa).

The disordered stretch occupies residues 1–23; sequence MTIGLEPAVSSKTKDKMEQDLSP. Residues 240 to 411 form the PCI domain; sequence NYIEIARCYL…GIATFTTTND (172 aa).

This sequence belongs to the proteasome subunit p55 family.

In terms of biological role, acts as a regulatory subunit of the 26S proteasome which is involved in the ATP-dependent degradation of ubiquitinated proteins. The polypeptide is 26S proteasome non-ATPase regulatory subunit 12 (psmD12) (Dictyostelium discoideum (Social amoeba)).